The sequence spans 202 residues: Peptide methionine sulfoxide reductase A3 (202 aa).

The tract at residues 1–34 is disordered; sequence MNILNRLGLGSSGQTNMDPSPIAQGNDDDTPAPG. Ser189 bears the Phosphoserine mark.

The protein belongs to the MsrA Met sulfoxide reductase family. In terms of tissue distribution, expressed in rosette and cauline leaves, and at lower levels in roots, stems and flowers (at protein level).

It is found in the cytoplasm. The protein resides in the cytosol. The catalysed reaction is L-methionyl-[protein] + [thioredoxin]-disulfide + H2O = L-methionyl-(S)-S-oxide-[protein] + [thioredoxin]-dithiol. It carries out the reaction [thioredoxin]-disulfide + L-methionine + H2O = L-methionine (S)-S-oxide + [thioredoxin]-dithiol. In terms of biological role, catalyzes the reduction of methionine sulfoxide (MetSO) to methionine in proteins. Plays a protective role against oxidative stress by restoring activity to proteins that have been inactivated by methionine oxidation. May prevent cellular oxidative damage due to light exposure. MSRA family specifically reduces the MetSO S-enantiomer. In Arabidopsis thaliana (Mouse-ear cress), this protein is Peptide methionine sulfoxide reductase A3 (MSRA3).